Here is a 344-residue protein sequence, read N- to C-terminus: 3-isopropylmalate dehydrogenase (344 aa).

74-87 (GPKWDALPRKIRPE) provides a ligand contact to NAD(+). Substrate is bound by residues arginine 94, arginine 104, arginine 132, and aspartate 217. The Mg(2+) site is built by aspartate 217, aspartate 241, and aspartate 245. Position 274–286 (274–286 (GSAPDIAGKGIAN)) interacts with NAD(+).

It belongs to the isocitrate and isopropylmalate dehydrogenases family. LeuB type 1 subfamily. As to quaternary structure, homodimer. Mg(2+) is required as a cofactor. The cofactor is Mn(2+).

The protein localises to the cytoplasm. It carries out the reaction (2R,3S)-3-isopropylmalate + NAD(+) = 4-methyl-2-oxopentanoate + CO2 + NADH. The protein operates within amino-acid biosynthesis; L-leucine biosynthesis; L-leucine from 3-methyl-2-oxobutanoate: step 3/4. Functionally, catalyzes the oxidation of 3-carboxy-2-hydroxy-4-methylpentanoate (3-isopropylmalate) to 3-carboxy-4-methyl-2-oxopentanoate. The product decarboxylates to 4-methyl-2 oxopentanoate. The polypeptide is 3-isopropylmalate dehydrogenase (leuB) (Thermus aquaticus).